A 322-amino-acid polypeptide reads, in one-letter code: Putative integrase ORF3 (322 aa).

Residues 153-322 (RGKLTDFKSI…SSKEMFLQNI (170 aa)) enclose the Integrase catalytic domain.

It belongs to the plectrovirus integrase ORF3 family.

In terms of biological role, this protein may encode an integrase, which is necessary for integration of the viral DNA into host genome. This Spiroplasma virus SpV1-R8A2 B (SpV1) protein is Putative integrase ORF3.